Reading from the N-terminus, the 459-residue chain is Nuclear hormone receptor family member nhr-11 (459 aa).

The nuclear receptor DNA-binding region spans 2–81 (GPLCAVCESP…AGMRSELVRS (80 aa)). NR C4-type zinc fingers lie at residues 5–26 (CAVC…CKAC) and 42–69 (CAAD…LRKC). Disordered stretches follow at residues 90–119 (RRKD…EEMD) and 134–162 (DLPL…SSFD). Residues 97-115 (NSDAAPNSNSPSTRQSSSP) are compositionally biased toward low complexity. An NR LBD domain is found at 188–458 (ENNSILQYYH…SMLHEMLNFQ (271 aa)).

It belongs to the nuclear hormone receptor family.

The protein localises to the nucleus. Its function is as follows. Orphan nuclear receptor. This chain is Nuclear hormone receptor family member nhr-11 (nhr-11), found in Caenorhabditis elegans.